A 405-amino-acid chain; its full sequence is Phosphoglycerate kinase (405 aa).

Substrate is bound by residues 21–23, arginine 38, 59–62, arginine 116, and arginine 156; these read DFN and HQSR. ATP is bound by residues glutamate 330 and 355-358; that span reads GGHT.

This sequence belongs to the phosphoglycerate kinase family. Monomer.

It is found in the cytoplasm. The enzyme catalyses (2R)-3-phosphoglycerate + ATP = (2R)-3-phospho-glyceroyl phosphate + ADP. It participates in carbohydrate degradation; glycolysis; pyruvate from D-glyceraldehyde 3-phosphate: step 2/5. The sequence is that of Phosphoglycerate kinase from Methanocorpusculum labreanum (strain ATCC 43576 / DSM 4855 / Z).